The following is a 338-amino-acid chain: MLTLGLESSCDETSCSLVQNGKILANKIASQDIHASYGGVIPELASRAHLQTFPELLTAATQSAGVSLEDIELISVANTPGLIGALSIGVNFAKGLASGLKRPLIGVNHVEAHLYAACMEAPATQFPALGLAISGAHTSLFLMPDATTFLLIGKTRDDAIGETFDKVARFLGLPYPGGQKLEELAREGDADAFAFSPARVSGYDFSFSGLKTAVLYALKGNNSSAKAPFPEVSETQKRNIAASFQKAVFMTIAQKLPDIVKTFSCESLIVGGGVANNSYFRRLLNQICSLPIYFPSSQLCSDNAAMIAGLGERLFCNRTHVSKEVIPCARYQWESACS.

2 residues coordinate Fe cation: His-109 and His-113. Substrate-binding positions include 132–136, Asp-165, Gly-178, and Asn-277; that span reads AISGA. A Fe cation-binding site is contributed by Asp-302.

Belongs to the KAE1 / TsaD family. It depends on Fe(2+) as a cofactor.

Its subcellular location is the cytoplasm. It catalyses the reaction L-threonylcarbamoyladenylate + adenosine(37) in tRNA = N(6)-L-threonylcarbamoyladenosine(37) in tRNA + AMP + H(+). Its function is as follows. Required for the formation of a threonylcarbamoyl group on adenosine at position 37 (t(6)A37) in tRNAs that read codons beginning with adenine. Is involved in the transfer of the threonylcarbamoyl moiety of threonylcarbamoyl-AMP (TC-AMP) to the N6 group of A37, together with TsaE and TsaB. TsaD likely plays a direct catalytic role in this reaction. The sequence is that of tRNA N6-adenosine threonylcarbamoyltransferase from Chlamydia trachomatis serovar A (strain ATCC VR-571B / DSM 19440 / HAR-13).